Here is a 611-residue protein sequence, read N- to C-terminus: UvrABC system protein C (611 aa).

Positions threonine 14–isoleucine 91 constitute a GIY-YIG domain. A UVR domain is found at aspartate 196–leucine 231.

It belongs to the UvrC family. Interacts with UvrB in an incision complex.

It localises to the cytoplasm. Functionally, the UvrABC repair system catalyzes the recognition and processing of DNA lesions. UvrC both incises the 5' and 3' sides of the lesion. The N-terminal half is responsible for the 3' incision and the C-terminal half is responsible for the 5' incision. The chain is UvrABC system protein C from Streptococcus gordonii (strain Challis / ATCC 35105 / BCRC 15272 / CH1 / DL1 / V288).